A 301-amino-acid chain; its full sequence is Probable alpha-L-glutamate ligase (301 aa).

The region spanning 104 to 287 (LQILARKGIG…VAGKIIEYLE (184 aa)) is the ATP-grasp domain. ATP contacts are provided by residues Lys141, 178 to 179 (EY), Asp187, and 211 to 213 (RSN). 3 residues coordinate Mg(2+): Asp248, Glu260, and Asn262. Residues Asp248, Glu260, and Asn262 each coordinate Mn(2+).

The protein belongs to the RimK family. Mg(2+) serves as cofactor. Requires Mn(2+) as cofactor.

The protein is Probable alpha-L-glutamate ligase of Picosynechococcus sp. (strain ATCC 27264 / PCC 7002 / PR-6) (Agmenellum quadruplicatum).